A 941-amino-acid chain; its full sequence is Cilia- and flagella-associated protein 69 (941 aa).

Positions 1-10 are enriched in low complexity; it reads MWTEEAAATA. Residues 1 to 23 form a disordered region; that stretch reads MWTEEAAATAEARESGIRNKSSS.

The protein resides in the cell projection. The protein localises to the cilium. Its subcellular location is the flagellum. Cilium- and flagellum-associated protein. In the olfactory epithelium, regulates the speed of activation and termination of the odor response and thus contributes to the robustness of olfactory transduction pathways. Required for sperm flagellum assembly and stability. The chain is Cilia- and flagella-associated protein 69 from Papio anubis (Olive baboon).